The sequence spans 536 residues: T-complex protein 1 subunit delta (536 aa).

The span at 1 to 15 shows a compositional bias: polar residues; the sequence is MPEGKATSSASNTGK. A disordered region spans residues 1-26; the sequence is MPEGKATSSASNTGKNKGGAYQDRDK. Gly-50 provides a ligand contact to ADP. Gly-50 provides a ligand contact to ATP. Asp-101 is a binding site for Mg(2+). Residues Gly-102, Thr-103, Thr-104, Ser-105, Ser-170, Lys-171, Gly-422, and Gln-507 each contribute to the ADP site. Residues Gly-102 and Thr-103 each coordinate ATP. Lys-171 is a binding site for ATP.

It belongs to the TCP-1 chaperonin family. Component of the chaperonin-containing T-complex (TRiC), a hexadecamer composed of two identical back-to-back stacked rings enclosing a protein folding chamber. Each ring is made up of eight different subunits: TCP1/CCT1, CCT2, CCT3, CCT4, CCT5, CCT6A/CCT6, CCT7, CCT8.

The protein localises to the cytoplasm. The enzyme catalyses ATP + H2O = ADP + phosphate + H(+). Functionally, component of the chaperonin-containing T-complex (TRiC), a molecular chaperone complex that assists the folding of actin, tubulin and other proteins upon ATP hydrolysis. This is T-complex protein 1 subunit delta (cct4) from Takifugu rubripes (Japanese pufferfish).